The primary structure comprises 465 residues: UDP-N-acetylmuramate--L-alanine ligase (465 aa).

Position 115-121 (115-121) interacts with ATP; it reads GTHGKTT.

The protein belongs to the MurCDEF family.

It is found in the cytoplasm. It catalyses the reaction UDP-N-acetyl-alpha-D-muramate + L-alanine + ATP = UDP-N-acetyl-alpha-D-muramoyl-L-alanine + ADP + phosphate + H(+). It participates in cell wall biogenesis; peptidoglycan biosynthesis. Its function is as follows. Cell wall formation. This is UDP-N-acetylmuramate--L-alanine ligase from Renibacterium salmoninarum (strain ATCC 33209 / DSM 20767 / JCM 11484 / NBRC 15589 / NCIMB 2235).